Reading from the N-terminus, the 564-residue chain is Septation ring formation regulator EzrA (564 aa).

Over 1–4 the chain is Extracellular; sequence MVLF. Residues 5 to 23 form a helical membrane-spanning segment; sequence IILAILVVILIAIGVLFYM. The Cytoplasmic portion of the chain corresponds to 24–564; it reads RSNKRNLIEK…KHIEEQVIKE (541 aa). Coiled-coil stretches lie at residues 84-126, 165-223, 271-303, and 350-435; these read VEEK…HQVT, EAAE…LIRE, MISR…YEVK, and VRQF…RRLL.

This sequence belongs to the EzrA family.

The protein resides in the cell membrane. Its function is as follows. Negative regulator of FtsZ ring formation; modulates the frequency and position of FtsZ ring formation. Inhibits FtsZ ring formation at polar sites. Interacts either with FtsZ or with one of its binding partners to promote depolymerization. This chain is Septation ring formation regulator EzrA, found in Staphylococcus epidermidis (strain ATCC 35984 / DSM 28319 / BCRC 17069 / CCUG 31568 / BM 3577 / RP62A).